A 411-amino-acid chain; its full sequence is Serine--tRNA ligase (411 aa).

Residue 226–228 (TSE) participates in L-serine binding. Position 257 to 259 (257 to 259 (RKE)) interacts with ATP. L-serine is bound at residue glutamate 280. An ATP-binding site is contributed by 344-347 (EISS). Serine 379 is a binding site for L-serine.

This sequence belongs to the class-II aminoacyl-tRNA synthetase family. Type-1 seryl-tRNA synthetase subfamily. As to quaternary structure, homodimer. The tRNA molecule binds across the dimer.

The protein localises to the cytoplasm. The enzyme catalyses tRNA(Ser) + L-serine + ATP = L-seryl-tRNA(Ser) + AMP + diphosphate + H(+). It catalyses the reaction tRNA(Sec) + L-serine + ATP = L-seryl-tRNA(Sec) + AMP + diphosphate + H(+). Its pathway is aminoacyl-tRNA biosynthesis; selenocysteinyl-tRNA(Sec) biosynthesis; L-seryl-tRNA(Sec) from L-serine and tRNA(Sec): step 1/1. Catalyzes the attachment of serine to tRNA(Ser). Is also able to aminoacylate tRNA(Sec) with serine, to form the misacylated tRNA L-seryl-tRNA(Sec), which will be further converted into selenocysteinyl-tRNA(Sec). The protein is Serine--tRNA ligase of Campylobacter jejuni subsp. jejuni serotype O:2 (strain ATCC 700819 / NCTC 11168).